Consider the following 361-residue polypeptide: Molybdenum import ATP-binding protein ModC (361 aa).

Residues 1-228 (MLNINIEKQL…EQMRPWVPLQ (228 aa)) enclose the ABC transporter domain. 31 to 38 (GRSGAGKT) contacts ATP. In terms of domain architecture, Mop spans 289 to 356 (GSSVRNLLRG…IKGVTMTQMD (68 aa)).

Belongs to the ABC transporter superfamily. Molybdate importer (TC 3.A.1.8) family. As to quaternary structure, the complex is composed of two ATP-binding proteins (ModC), two transmembrane proteins (ModB) and a solute-binding protein (ModA).

It is found in the cell inner membrane. The catalysed reaction is molybdate(out) + ATP + H2O = molybdate(in) + ADP + phosphate + H(+). Its function is as follows. Part of the ABC transporter complex ModABC involved in molybdenum import. Responsible for energy coupling to the transport system. The chain is Molybdenum import ATP-binding protein ModC from Shewanella sp. (strain MR-7).